The primary structure comprises 561 residues: Putative transport protein YbjL (561 aa).

The next 5 helical transmembrane spans lie at 8–28, 32–52, 66–86, 94–114, and 158–178; these read LLNG…LCLG, LGSI…LLGQ, FMLF…SIFF, MLAL…GKLF, and NLSL…IVGA. RCK C-terminal domains follow at residues 200–288 and 292–373; these read RGLD…SFRN and VFDR…RIGF. Transmembrane regions (helical) follow at residues 383-403, 406-426, 451-471, 475-495, and 540-560; these read LLAF…TFQF, FSFG…LGFM, VFMA…LGAI, MLIA…LFGA, and AIAN…WPGL.

Belongs to the AAE transporter (TC 2.A.81) family. YbjL subfamily.

It localises to the cell membrane. This is Putative transport protein YbjL from Shigella sonnei (strain Ss046).